Here is a 403-residue protein sequence, read N- to C-terminus: Coenzyme A biosynthesis bifunctional protein CoaBC (403 aa).

A phosphopantothenoylcysteine decarboxylase region spans residues 1-197; the sequence is MISEIMHPTK…GNNLKKEGNR (197 aa). Positions 198–403 are phosphopantothenate--cysteine ligase; sequence VLILNGGTVE…VEKVKKLVKS (206 aa). CTP-binding residues include Asp285, Lys294, and Phe327.

The protein in the N-terminal section; belongs to the HFCD (homo-oligomeric flavin containing Cys decarboxylase) superfamily. It in the C-terminal section; belongs to the PPC synthetase family. Homododecamer. The CoaC domain is responsible for dodecamer formation. Mg(2+) is required as a cofactor. FMN serves as cofactor.

The enzyme catalyses N-[(R)-4-phosphopantothenoyl]-L-cysteine + H(+) = (R)-4'-phosphopantetheine + CO2. It catalyses the reaction (R)-4'-phosphopantothenate + L-cysteine + CTP = N-[(R)-4-phosphopantothenoyl]-L-cysteine + CMP + diphosphate + H(+). It functions in the pathway cofactor biosynthesis; coenzyme A biosynthesis. Functionally, catalyzes two sequential steps in the biosynthesis of coenzyme A. In the first step cysteine is conjugated to 4'-phosphopantothenate to form 4-phosphopantothenoylcysteine. In the second step the latter compound is decarboxylated to form 4'-phosphopantotheine. The polypeptide is Coenzyme A biosynthesis bifunctional protein CoaBC (Methanocaldococcus jannaschii (strain ATCC 43067 / DSM 2661 / JAL-1 / JCM 10045 / NBRC 100440) (Methanococcus jannaschii)).